We begin with the raw amino-acid sequence, 208 residues long: Large ribosomal subunit protein bL25 (208 aa).

Belongs to the bacterial ribosomal protein bL25 family. CTC subfamily. As to quaternary structure, part of the 50S ribosomal subunit; part of the 5S rRNA/L5/L18/L25 subcomplex. Contacts the 5S rRNA. Binds to the 5S rRNA independently of L5 and L18.

In terms of biological role, this is one of the proteins that binds to the 5S RNA in the ribosome where it forms part of the central protuberance. This Paracoccus denitrificans (strain Pd 1222) protein is Large ribosomal subunit protein bL25.